The chain runs to 414 residues: CinA-like protein (414 aa).

This sequence belongs to the CinA family.

In Acidobacterium capsulatum (strain ATCC 51196 / DSM 11244 / BCRC 80197 / JCM 7670 / NBRC 15755 / NCIMB 13165 / 161), this protein is CinA-like protein.